A 503-amino-acid chain; its full sequence is Arabinose import ATP-binding protein AraG 1 (503 aa).

2 ABC transporter domains span residues 5–240 (LRFD…MVGR) and 251–497 (RTLG…LPQT). ATP is bound at residue 37–44 (GENGAGKS).

It belongs to the ABC transporter superfamily. Arabinose importer (TC 3.A.1.2.2) family. As to quaternary structure, the complex is composed of two ATP-binding proteins (AraG), two transmembrane proteins (AraH) and a solute-binding protein (AraF).

The protein resides in the cell inner membrane. It catalyses the reaction L-arabinose(out) + ATP + H2O = L-arabinose(in) + ADP + phosphate + H(+). Its function is as follows. Part of the ABC transporter complex AraFGH involved in arabinose import. Responsible for energy coupling to the transport system. The protein is Arabinose import ATP-binding protein AraG 1 of Burkholderia cenocepacia (strain HI2424).